The following is a 475-amino-acid chain: Ribulose bisphosphate carboxylase large chain (475 aa).

Residues 1 to 2 (MS) constitute a propeptide that is removed on maturation. N-acetylproline is present on Pro-3. Residue Lys-14 is modified to N6,N6,N6-trimethyllysine. Residues Asn-123 and Thr-173 each coordinate substrate. The Proton acceptor role is filled by Lys-175. Lys-177 is a binding site for substrate. Positions 201, 203, and 204 each coordinate Mg(2+). An N6-carboxylysine modification is found at Lys-201. The Proton acceptor role is filled by His-294. Residues Arg-295, His-327, and Ser-379 each contribute to the substrate site.

It belongs to the RuBisCO large chain family. Type I subfamily. Heterohexadecamer of 8 large chains and 8 small chains; disulfide-linked. The disulfide link is formed within the large subunit homodimers. Mg(2+) serves as cofactor. In terms of processing, the disulfide bond which can form in the large chain dimeric partners within the hexadecamer appears to be associated with oxidative stress and protein turnover.

It localises to the plastid. The protein localises to the chloroplast. It carries out the reaction 2 (2R)-3-phosphoglycerate + 2 H(+) = D-ribulose 1,5-bisphosphate + CO2 + H2O. The catalysed reaction is D-ribulose 1,5-bisphosphate + O2 = 2-phosphoglycolate + (2R)-3-phosphoglycerate + 2 H(+). RuBisCO catalyzes two reactions: the carboxylation of D-ribulose 1,5-bisphosphate, the primary event in carbon dioxide fixation, as well as the oxidative fragmentation of the pentose substrate in the photorespiration process. Both reactions occur simultaneously and in competition at the same active site. In Cucumis sativus (Cucumber), this protein is Ribulose bisphosphate carboxylase large chain (rbcL).